Reading from the N-terminus, the 375-residue chain is Probable peptidoglycan glycosyltransferase FtsW (375 aa).

Topologically, residues 1–16 (MNLNFKLNLKEIERYD) are cytoplasmic. Residues 17–37 (LVILLMAVALTCFGVVMVYSA) traverse the membrane as a helical segment. Topologically, residues 38 to 49 (SSVMATKKFHDG) are periplasmic. The helical transmembrane segment at 50-70 (FYFLKRQGIYAILGCAAMIVA) threads the bilayer. Over 71–81 (MRIDYRQWREY) the chain is Cytoplasmic. Residues 82 to 102 (AVPILLGCLLLLLLVFIPGIG) traverse the membrane as a helical segment. At 103 to 145 (GAAKGASRWIRFPGFNLQPSELAKIALIMYMAYSLDKKQEKVK) the chain is on the periplasmic side. A helical transmembrane segment spans residues 146–166 (FFSTGFAPYMVLLAILLAILL). The Cytoplasmic portion of the chain corresponds to 167–169 (KQH). Residues 170-190 (DLGSALTMGGVAILMLFAAGT) traverse the membrane as a helical segment. Residues 191 to 193 (RPR) are Periplasmic-facing. A helical transmembrane segment spans residues 194 to 214 (YILGMVVLTLPFLYFLVMNVD). Topologically, residues 215–233 (YRRRRILAYLNPWEDPTNT) are cytoplasmic. A helical membrane pass occupies residues 234–254 (GFQIIQSWLAFGNGGIIGQGL). The Periplasmic segment spans residues 255 to 279 (GEGKQKMFFLPEAHTDFILSVVGEE). The helical transmembrane segment at 280 to 300 (LGLIGVIVIAAMFLMLVLRGV) threads the bilayer. The Cytoplasmic portion of the chain corresponds to 301 to 312 (RVALMAQDPFGR). The helical transmembrane segment at 313–333 (FLAFGIVTLLGIQAFVNMGVV) threads the bilayer. Residues 334 to 343 (TGLLPTKGLA) are Periplasmic-facing. The chain crosses the membrane as a helical span at residues 344-364 (LPFISYGGSSLIVTLFAVGIL). Residues 365–375 (LNVSTRMKGTP) are Cytoplasmic-facing.

Belongs to the SEDS family. FtsW subfamily.

It is found in the cell inner membrane. The catalysed reaction is [GlcNAc-(1-&gt;4)-Mur2Ac(oyl-L-Ala-gamma-D-Glu-L-Lys-D-Ala-D-Ala)](n)-di-trans,octa-cis-undecaprenyl diphosphate + beta-D-GlcNAc-(1-&gt;4)-Mur2Ac(oyl-L-Ala-gamma-D-Glu-L-Lys-D-Ala-D-Ala)-di-trans,octa-cis-undecaprenyl diphosphate = [GlcNAc-(1-&gt;4)-Mur2Ac(oyl-L-Ala-gamma-D-Glu-L-Lys-D-Ala-D-Ala)](n+1)-di-trans,octa-cis-undecaprenyl diphosphate + di-trans,octa-cis-undecaprenyl diphosphate + H(+). Its pathway is cell wall biogenesis; peptidoglycan biosynthesis. Its function is as follows. Peptidoglycan polymerase that is essential for cell division. The protein is Probable peptidoglycan glycosyltransferase FtsW of Geobacter metallireducens (strain ATCC 53774 / DSM 7210 / GS-15).